The primary structure comprises 461 residues: BSD domain-containing protein 1 (461 aa).

Ser123 and Ser197 each carry phosphoserine. A BSD domain is found at 177–229 (WLSQFCLEEKKGEISELLVGSPSIRALYTKMVPAAVSHSEFWHRYFYKVHQLE). The tract at residues 239–384 (KQRAEQSISE…SGPEPRPPAR (146 aa)) is disordered. Over residues 250-259 (PGWEEEEEEL) the composition is skewed to acidic residues. Residues 295–318 (LVTPVEPPTEVTPSESSESVSLVT) are compositionally biased toward low complexity. Phosphothreonine is present on Thr387. The tract at residues 398-430 (VFELNSDSGKSTPSNNGKKGSSTDISEDWEKDF) is disordered. Positions 402–421 (NSDSGKSTPSNNGKKGSSTD) are enriched in polar residues. A phosphoserine mark is found at Ser418, Ser419, and Ser449.

The protein is BSD domain-containing protein 1 (BSDC1) of Bos taurus (Bovine).